The sequence spans 424 residues: GTPase Obg (424 aa).

The Obg domain maps to 1–159; it reads MVFIDTARIY…MWVRLELKLL (159 aa). In terms of domain architecture, OBG-type G spans 160-330; that stretch reads ADVGLVGFPN…LLDKTIEILS (171 aa). Residues 166-173, 191-195, 212-215, 282-285, and 311-313 each bind GTP; these read GFPNAGKS, FTTLT, DIPG, NKMD, and SAL. Mg(2+)-binding residues include S173 and T193. The OCT domain occupies 347 to 424; that stretch reads NPPEEEETLE…VRDFEFEYYE (78 aa).

It belongs to the TRAFAC class OBG-HflX-like GTPase superfamily. OBG GTPase family. Monomer. The cofactor is Mg(2+).

The protein resides in the cytoplasm. In terms of biological role, an essential GTPase which binds GTP, GDP and possibly (p)ppGpp with moderate affinity, with high nucleotide exchange rates and a fairly low GTP hydrolysis rate. Plays a role in control of the cell cycle, stress response, ribosome biogenesis and in those bacteria that undergo differentiation, in morphogenesis control. The polypeptide is GTPase Obg (Caldanaerobacter subterraneus subsp. tengcongensis (strain DSM 15242 / JCM 11007 / NBRC 100824 / MB4) (Thermoanaerobacter tengcongensis)).